Reading from the N-terminus, the 148-residue chain is Deoxyuridine 5'-triphosphate nucleotidohydrolase (148 aa).

Residues 68–70, asparagine 81, 85–87, and lysine 95 contribute to the substrate site; these read RSG and TID.

Belongs to the dUTPase family. The cofactor is Mg(2+).

The catalysed reaction is dUTP + H2O = dUMP + diphosphate + H(+). It participates in pyrimidine metabolism; dUMP biosynthesis; dUMP from dCTP (dUTP route): step 2/2. This enzyme is involved in nucleotide metabolism: it produces dUMP, the immediate precursor of thymidine nucleotides and it decreases the intracellular concentration of dUTP so that uracil cannot be incorporated into DNA. In Thermoanaerobacter sp. (strain X514), this protein is Deoxyuridine 5'-triphosphate nucleotidohydrolase.